The sequence spans 282 residues: Pantothenate synthetase (282 aa).

Met-30 to His-37 provides a ligand contact to ATP. His-37 functions as the Proton donor in the catalytic mechanism. (R)-pantoate is bound at residue Gln-61. A beta-alanine-binding site is contributed by Gln-61. Gly-147–Asp-150 serves as a coordination point for ATP. Position 153 (Gln-153) interacts with (R)-pantoate. ATP contacts are provided by residues Ile-176 and Lys-184–Arg-187.

This sequence belongs to the pantothenate synthetase family. Homodimer.

It localises to the cytoplasm. It catalyses the reaction (R)-pantoate + beta-alanine + ATP = (R)-pantothenate + AMP + diphosphate + H(+). The protein operates within cofactor biosynthesis; (R)-pantothenate biosynthesis; (R)-pantothenate from (R)-pantoate and beta-alanine: step 1/1. In terms of biological role, catalyzes the condensation of pantoate with beta-alanine in an ATP-dependent reaction via a pantoyl-adenylate intermediate. This chain is Pantothenate synthetase, found in Enterococcus faecalis (strain ATCC 700802 / V583).